The sequence spans 888 residues: uncharacterized protein (888 aa).

An N-terminal signal peptide occupies residues 1 to 20 (MKILKSLVLLVLFIVMPAKA). The next 6 membrane-spanning stretches (helical) occupy residues 513-533 (IVKA…VAGA), 565-585 (TYFF…VVGA), 611-631 (LLFI…IITI), 649-669 (VIAF…IILM), 682-702 (ISTL…FLLI), and 781-801 (LLFY…NIVV).

This sequence belongs to the TrbL/VirB6 family.

It localises to the cell membrane. This is an uncharacterized protein from Rickettsia prowazekii (strain Madrid E).